Reading from the N-terminus, the 391-residue chain is Tumor susceptibility gene 101 protein (391 aa).

Ala-2 carries the N-acetylalanine modification. Positions 2–145 constitute a UEV domain; it reads AVSESQLKKM…GEEPPVFSRP (144 aa). Positions 159–163 are interaction with CEP55; it reads PPNTS. A disordered region spans residues 197 to 220; that stretch reads YPATTSSQYPSQPPVTTVGPSRDG. The segment covering 200 to 215 has biased composition (polar residues); the sequence is TTSSQYPSQPPVTTVG. Thr-221 is modified (phosphothreonine). Residues 237 to 317 adopt a coiled-coil conformation; sequence DKLRWRMKEE…NQSENNDIDE (81 aa). The PTAP/PSAP motif signature appears at 321–324; sequence PTAP. Residues 323–391 form the SB domain; sequence APLYKQILNL…RKTAGLSDLY (69 aa).

This sequence belongs to the ubiquitin-conjugating enzyme family. UEV subfamily. In terms of assembly, component of the ESCRT-I complex (endosomal sorting complex required for transport I) which consists of TSG101, VPS28, a VPS37 protein (VPS37A to -D) and MVB12A or MVB12B in a 1:1:1:1 stoichiometry. Interacts with VPS37A, VPS37B and VPS37C. Component of an ESCRT-I complex (endosomal sorting complex required for transport I) which consists of TSG101, VPS28, VPS37A and UBAP1 in a 1:1:1:1 stoichiometry. Interacts with DMAP1. Interacts with GMCL. Interacts with ubiquitin, stathmin and AATF. Interacts with HGS; the interaction mediates the association with the ESCRT-0 complex. Interacts with GGA1 and GGA3. Interacts (via UEV domain) with PDCD6IP/AIP1. Interacts with VPS28, SNF8 and VPS36. Self-associates. Interacts with MVB12A; the association appears to be mediated by the TSG101-VPS37 binary subcomplex. Interacts with VPS37D. Interacts with LRSAM1. Interacts with CEP55; the interaction is required for cytokinesis. Interacts with PDCD6. Interacts with LITAF. Interacts with murine leukemia virus Gag polyprotein (via PSAP motif). Interacts with MGRN1. Interacts with ARRDC1; recruits TSG101 to the plasma membrane. Post-translationally, monoubiquitinated at multiple sites by LRSAM1 and by MGRN1. Ubiquitination inactivates it, possibly by regulating its shuttling between an active membrane-bound protein and an inactive soluble form. Ubiquitination by MGRN1 requires the presence of UBE2D1. In terms of tissue distribution, ubiquitous. Higher expression in brain and mammary gland. Lower expression in liver and tumoral tissues.

Its subcellular location is the cytoplasm. It is found in the early endosome membrane. It localises to the late endosome membrane. The protein localises to the cytoskeleton. The protein resides in the microtubule organizing center. Its subcellular location is the centrosome. It is found in the midbody. It localises to the midbody ring. The protein localises to the nucleus. Its function is as follows. Component of the ESCRT-I complex, a regulator of vesicular trafficking process. Binds to ubiquitinated cargo proteins and is required for the sorting of endocytic ubiquitinated cargos into multivesicular bodies (MVBs). Mediates the association between the ESCRT-0 and ESCRT-I complex. Required for completion of cytokinesis; the function requires CEP55. May be involved in cell growth and differentiation. Acts as a negative growth regulator. Required for the exosomal release of SDCBP, CD63 and syndecan. It may also play a role in the extracellular release of microvesicles that differ from the exosomes. This is Tumor susceptibility gene 101 protein (Tsg101) from Mus musculus (Mouse).